The sequence spans 143 residues: AP-2 complex subunit sigma (143 aa).

The protein belongs to the adaptor complexes small subunit family. Adaptor protein complex 2 (AP-2) is a heterotetramer composed of two large adaptins (alpha-type subunit apl3 and beta-type subunit apl1), a medium chain (mu-type subunit apm4) and a small adaptin (sigma-type subunit aps2).

The protein localises to the cell membrane. It localises to the membrane. It is found in the coated pit. Component of the adaptor complexes which link clathrin to receptors in coated vesicles. Clathrin-associated protein complexes are believed to interact with the cytoplasmic tails of membrane proteins, leading to their selection and concentration. The polypeptide is AP-2 complex subunit sigma (aps2) (Schizosaccharomyces pombe (strain 972 / ATCC 24843) (Fission yeast)).